Here is a 207-residue protein sequence, read N- to C-terminus: Small ribosomal subunit protein uS4 (207 aa).

Positions 29-38 (QDKAKFDSKP) are enriched in basic and acidic residues. A disordered region spans residues 29–54 (QDKAKFDSKPGQHGRTSGQRTSDYGL). Polar residues predominate over residues 42 to 52 (GRTSGQRTSDY). The S4 RNA-binding domain occupies 97–160 (SRLDNVVYRM…KKQTRIAEAL (64 aa)).

The protein belongs to the universal ribosomal protein uS4 family. In terms of assembly, part of the 30S ribosomal subunit. Contacts protein S5. The interaction surface between S4 and S5 is involved in control of translational fidelity.

Functionally, one of the primary rRNA binding proteins, it binds directly to 16S rRNA where it nucleates assembly of the body of the 30S subunit. Its function is as follows. With S5 and S12 plays an important role in translational accuracy. This chain is Small ribosomal subunit protein uS4, found in Variovorax paradoxus (strain S110).